The sequence spans 401 residues: Probable [pyruvate dehydrogenase (acetyl-transferring)] kinase, mitochondrial (401 aa).

A Histidine kinase domain is found at 131–360 (LIELRESDGV…DACIYLKAVP (230 aa)). Residues 247–254 (ELFKNAMR), aspartate 286, 305–306 (ST), and 321–326 (GYGYGL) contribute to the ATP site.

Belongs to the PDK/BCKDK protein kinase family.

The protein resides in the mitochondrion matrix. It carries out the reaction L-seryl-[pyruvate dehydrogenase E1 alpha subunit] + ATP = O-phospho-L-seryl-[pyruvate dehydrogenase E1 alpha subunit] + ADP + H(+). Inhibits the mitochondrial pyruvate dehydrogenase complex by phosphorylation of the E1 alpha subunit, thus contributing to the regulation of glucose metabolism. Required for normal lifespan. The protein is Probable [pyruvate dehydrogenase (acetyl-transferring)] kinase, mitochondrial (pdhk-2) of Caenorhabditis elegans.